The following is a 323-amino-acid chain: Trihelix transcription factor GT-3a (323 aa).

Positions M1 to L20 are enriched in basic residues. Positions M1–Q51 are disordered. The 57-residue stretch at W52–V108 folds into the Myb-like domain. Disordered regions lie at residues E147–Q176, K190–A220, and E269–Q297. Residues S164 to Q176 are compositionally biased toward acidic residues.

In terms of assembly, homodimer. Heterodimer with GT-3B. Predominantly expressed in roots and flower buds.

Its subcellular location is the nucleus. Functionally, probable transcription factor that binds specifically to the core DNA sequence 5'-GTTAC-3'. The protein is Trihelix transcription factor GT-3a (GT-3A) of Arabidopsis thaliana (Mouse-ear cress).